The chain runs to 158 residues: Cyclic pyranopterin monophosphate synthase (158 aa).

Substrate-binding positions include 75–77 (LCH) and 113–114 (ME). Residue Asp-128 is part of the active site.

This sequence belongs to the MoaC family. In terms of assembly, homohexamer; trimer of dimers.

It carries out the reaction (8S)-3',8-cyclo-7,8-dihydroguanosine 5'-triphosphate = cyclic pyranopterin phosphate + diphosphate. Its pathway is cofactor biosynthesis; molybdopterin biosynthesis. Catalyzes the conversion of (8S)-3',8-cyclo-7,8-dihydroguanosine 5'-triphosphate to cyclic pyranopterin monophosphate (cPMP). The sequence is that of Cyclic pyranopterin monophosphate synthase from Mannheimia succiniciproducens (strain KCTC 0769BP / MBEL55E).